Reading from the N-terminus, the 84-residue chain is Large ribosomal subunit protein bL27 (84 aa).

The disordered stretch occupies residues 1 to 22; sequence MAHKKAGGSTRNGRDSESKRLG.

It belongs to the bacterial ribosomal protein bL27 family.

This Shewanella frigidimarina (strain NCIMB 400) protein is Large ribosomal subunit protein bL27.